The primary structure comprises 150 residues: Large-conductance mechanosensitive channel (150 aa).

2 helical membrane passes run Val19 to Leu39 and Gly85 to Ile105.

Belongs to the MscL family. In terms of assembly, homopentamer.

The protein localises to the cell inner membrane. In terms of biological role, channel that opens in response to stretch forces in the membrane lipid bilayer. May participate in the regulation of osmotic pressure changes within the cell. This Chlorobium limicola (strain DSM 245 / NBRC 103803 / 6330) protein is Large-conductance mechanosensitive channel.